The following is a 1347-amino-acid chain: Protocadherin-11 X-linked (1347 aa).

Positions 1 to 23 (MDLLSGTYIFAVLLACVVFHSGA) are cleaved as a signal peptide. Topologically, residues 24-812 (QEKNYTIREE…VSSPTSDYVK (789 aa)) are extracellular. Cadherin domains are found at residues 26 to 139 (KNYT…APLF), 140 to 249 (PATV…HPVF), 250 to 355 (KETE…VPSI), 362 to 466 (NPIN…APVF), 467 to 570 (TQSF…SPVF), 571 to 673 (THNE…KPVF), and 677 to 795 (PSNY…APVT). 3 N-linked (GlcNAc...) asparagine glycosylation sites follow: N27, N48, and N54. An N-linked (GlcNAc...) asparagine glycan is attached at N344. A glycan (N-linked (GlcNAc...) asparagine) is linked at N553. N-linked (GlcNAc...) asparagine glycosylation is present at N773. Residues 813 to 833 (ILVAAVAGTVTVVVVIFITAV) form a helical membrane-spanning segment. The Cytoplasmic segment spans residues 834-1347 (VRCRQAPHLK…DSPIMEEHPL (514 aa)). Disordered regions lie at residues 1031–1050 (IWIH…GKSQ), 1057–1091 (LPEG…GYPQ), 1097–1116 (RATP…ESTF), and 1325–1347 (TFTP…EHPL).

Its subcellular location is the cell membrane. In terms of biological role, potential calcium-dependent cell-adhesion protein. In Pongo pygmaeus (Bornean orangutan), this protein is Protocadherin-11 X-linked (PCDH11X).